The chain runs to 272 residues: Inositol monophosphatase (272 aa).

Residues Glu71, Asp90, Ile92, and Asp93 each coordinate Mg(2+). Glu71 contacts substrate. Substrate contacts are provided by residues 92–95 (IDGT), 194–196 (GTA), Glu213, and Asp220. Asp220 lines the Mg(2+) pocket.

It belongs to the inositol monophosphatase superfamily. It depends on Mg(2+) as a cofactor.

It localises to the cytoplasm. It carries out the reaction a myo-inositol phosphate + H2O = myo-inositol + phosphate. The catalysed reaction is alpha-D-galactose 1-phosphate + H2O = D-galactose + phosphate. It participates in polyol metabolism; myo-inositol biosynthesis; myo-inositol from D-glucose 6-phosphate: step 2/2. Inhibited by Li(+), Ca(2+) and Mn(2+), but also by Mg(2+) at concentrations above 3 mM. Responsible for the provision of inositol required for synthesis of phosphatidylinositol and polyphosphoinositides. Has broad substrate specificity and can use myo-inositol monophosphates, myo-inositol 1,3-diphosphate, myo-inositol 1,4-diphosphate, scyllo-inositol-phosphate, D-galactose 1-phosphate, glucose-1-phosphate, glucose-6-phosphate, fructose-1-phosphate, beta-glycerophosphate, and 2'-AMP as substrates. This chain is Inositol monophosphatase (impa1), found in Dictyostelium discoideum (Social amoeba).